Here is a 465-residue protein sequence, read N- to C-terminus: Uronate isomerase (465 aa).

Belongs to the metallo-dependent hydrolases superfamily. Uronate isomerase family.

The enzyme catalyses D-glucuronate = D-fructuronate. The catalysed reaction is aldehydo-D-galacturonate = keto-D-tagaturonate. Its pathway is carbohydrate metabolism; pentose and glucuronate interconversion. This chain is Uronate isomerase, found in Streptococcus equi subsp. zooepidemicus (strain H70).